The primary structure comprises 82 residues: Small ribosomal subunit protein uS17 (82 aa).

The protein belongs to the universal ribosomal protein uS17 family. Part of the 30S ribosomal subunit.

One of the primary rRNA binding proteins, it binds specifically to the 5'-end of 16S ribosomal RNA. In Rickettsia rickettsii (strain Iowa), this protein is Small ribosomal subunit protein uS17.